Reading from the N-terminus, the 197-residue chain is uncharacterized protein (197 aa).

The SIS domain maps to 33–184; sequence MISKIMDASS…IAEFMSILGK (152 aa).

It belongs to the SIS family. PHI subfamily.

This is an uncharacterized protein from Methanothermobacter thermautotrophicus (strain ATCC 29096 / DSM 1053 / JCM 10044 / NBRC 100330 / Delta H) (Methanobacterium thermoautotrophicum).